The primary structure comprises 298 residues: Homoserine kinase (298 aa).

Residue 92–102 (PLARGLGSSAT) coordinates ATP.

This sequence belongs to the GHMP kinase family. Homoserine kinase subfamily.

The protein resides in the cytoplasm. The enzyme catalyses L-homoserine + ATP = O-phospho-L-homoserine + ADP + H(+). It functions in the pathway amino-acid biosynthesis; L-threonine biosynthesis; L-threonine from L-aspartate: step 4/5. Functionally, catalyzes the ATP-dependent phosphorylation of L-homoserine to L-homoserine phosphate. This is Homoserine kinase (thrB) from Nostoc sp. (strain PCC 7120 / SAG 25.82 / UTEX 2576).